A 333-amino-acid polypeptide reads, in one-letter code: Isoaspartyl peptidase/L-asparaginase (333 aa).

Catalysis depends on threonine 191, which acts as the Nucleophile. Substrate-binding positions include 219–222 and 242–245; these read RVGD and TGHG.

It belongs to the Ntn-hydrolase family. Heterodimer of an alpha and beta chain produced by autocleavage. This heterodimer may then dimerize in turn, giving rise to a heterotetramer. Cleaved into an alpha and beta chain by autocatalysis; this activates the enzyme. The N-terminal residue of the beta subunit is responsible for the nucleophile hydrolase activity. As to expression, present in testis, brain, liver, kidney, heart and skeletal muscle. In brain, specifically present in the astrocytic lineage. Present in sperm (at protein level).

The protein resides in the cytoplasm. The catalysed reaction is L-asparagine + H2O = L-aspartate + NH4(+). The enzyme catalyses Cleavage of a beta-linked Asp residue from the N-terminus of a polypeptide.. Functionally, has both L-asparaginase and beta-aspartyl peptidase activity. Is highly active with L-Asp beta-methyl ester. Besides, has catalytic activity toward beta-aspartyl dipeptides and their methyl esters, including beta-L-Asp-L-Phe, beta-L-Asp-L-Phe methyl ester (aspartame), beta-L-Asp-L-Ala, beta-L-Asp-L-Leu and beta-L-Asp-L-Lys. Does not have aspartylglucosaminidase activity and is inactive toward GlcNAc-L-Asn. Likewise, has no activity toward glutamine. May be involved in the production of L-aspartate, which can act as an excitatory neurotransmitter in some brain regions. The chain is Isoaspartyl peptidase/L-asparaginase (Asrgl1) from Rattus norvegicus (Rat).